A 231-amino-acid polypeptide reads, in one-letter code: Cilia- and flagella-associated protein 299 (231 aa).

It localises to the cytoplasm. It is found in the nucleus. In terms of biological role, may be involved in spermatogenesis. This chain is Cilia- and flagella-associated protein 299, found in Bos taurus (Bovine).